Here is a 238-residue protein sequence, read N- to C-terminus: Protein G1-like8 (238 aa).

Disordered stretches follow at residues 1-33 (MEGGGGGADGQAQPVAQAPPAMQPMQQLSRYES) and 147-238 (KARG…ATRV). The span at 10–27 (GQAQPVAQAPPAMQPMQQ) shows a compositional bias: low complexity. Positions 30–157 (RYESQKRRDW…ARGIPYEKKK (128 aa)) constitute an ALOG domain. The Nuclear localization signal motif lies at 155–159 (KKKRK). Over residues 165–176 (QPPPPPPPPPQH) the composition is skewed to pro residues. 2 stretches are compositionally biased toward low complexity: residues 177–213 (QPGAAAGEASSSSSAAAAAVAAEGSGSSAAAAAATSQ) and 222–238 (TTTTTASAAAPTTATRV).

This sequence belongs to the plant homeotic and developmental regulators ALOG protein family.

It is found in the nucleus. Probable transcription regulator that acts as a developmental regulator by promoting cell growth in response to light. This chain is Protein G1-like8 (G1L8), found in Oryza sativa subsp. japonica (Rice).